Here is a 259-residue protein sequence, read N- to C-terminus: Thiazole synthase (259 aa).

Residue Lys-98 is the Schiff-base intermediate with DXP of the active site. Residues Gly-159, Ala-185–Gly-186, and Asn-207–Ser-208 each bind 1-deoxy-D-xylulose 5-phosphate.

It belongs to the ThiG family. Homotetramer. Forms heterodimers with either ThiH or ThiS.

Its subcellular location is the cytoplasm. It catalyses the reaction [ThiS sulfur-carrier protein]-C-terminal-Gly-aminoethanethioate + 2-iminoacetate + 1-deoxy-D-xylulose 5-phosphate = [ThiS sulfur-carrier protein]-C-terminal Gly-Gly + 2-[(2R,5Z)-2-carboxy-4-methylthiazol-5(2H)-ylidene]ethyl phosphate + 2 H2O + H(+). It participates in cofactor biosynthesis; thiamine diphosphate biosynthesis. Its function is as follows. Catalyzes the rearrangement of 1-deoxy-D-xylulose 5-phosphate (DXP) to produce the thiazole phosphate moiety of thiamine. Sulfur is provided by the thiocarboxylate moiety of the carrier protein ThiS. In vitro, sulfur can be provided by H(2)S. This chain is Thiazole synthase, found in Chlorobium phaeobacteroides (strain DSM 266 / SMG 266 / 2430).